The primary structure comprises 327 residues: uncharacterized protein (327 aa).

The helical transmembrane segment at 12-32 threads the bilayer; the sequence is LVVVVVAIAIFTLVLLMLWEG. Positions 149 to 170 are disordered; the sequence is AFSAVETSEGSDQESEGADEQG. Residues 157-167 are compositionally biased toward acidic residues; sequence EGSDQESEGAD. The stretch at 162–227 forms a coiled coil; it reads ESEGADEQGK…LDEENREVAE (66 aa).

Its subcellular location is the membrane. This is an uncharacterized protein from Encephalitozoon cuniculi (strain GB-M1) (Microsporidian parasite).